A 1926-amino-acid chain; its full sequence is MDLSDLGEAAAFLRRSEAELLLLQATALDGKKKCWIPDGENAYIEAEVKGSEDDGTVIVETADGESLSIKEDKIQQMNPPEFEMIEDMAMLTHLNEASVLHTLKRRYGQWMIYTYSGLFCVTINPYKWLPVYQKEVMAAYKGKRRSEAPPHIFAVANNAFQDMLHNRENQSILFTGESGAGKTVNSKHIIQYFATIAAMIESRKKQGALEDQIMQANTILEAFGNAKTLRNDNSSRFGKFIRMHFGARGMLSSVDIDIYLLEKSRVIFQQAGERNYHIFYQILSGQKELHDLLLVSANPSDFHFCSCGAVTVESLDDAEELLATEQAMDILGFLPDEKYGCYKLTGAIMHFGNMKFKQKPREEQLEADGTENADKAAFLMGINSSELVKCLIHPRIKVGNEYVTRGQTIEQVTCAVGALSKSMYERMFKWLVARINRALDAKLSRQFFIGILDITGFEILEYNSLEQLCINFTNEKLQQFFNWHMFVLEQEEYKKESIEWVSIGFGLDLQACIDLIEKPMGILSILEEECMFPKATDLTFKTKLFDNHFGKSVHLQKPKPDKKKFEAHFELVHYAGVVPYNISGWLEKNKDLLNETVVAVFQKSSNRLLASLFENYMSTDSAIPFGEKKRKKGASFQTVASLHKENLNKLMTNLKSTAPHFVRCINPNVNKIPGILDPYLVLQQLRCNGVLEGTRICREGFPNRLQYADFKQRYCILNPRTFPKSKFVSSRKAAEELLGSLEIDHTQYRFGITKVFFKAGFLGQLEAIRDERLSKVFTLFQARAQGKLMRIKFQKILEERDALILIQWNIRAFMAVKNWPWMRLFFKIKPLVKSSEVGEEVAGLKEECAQLQKALEKSEFQREELKAKQVSLTQEKNDLILQLQAEQETLANVEEQCEWLIKSKIQLEARVKELSERVEEEEEINSELTARGRKLEDECFELKKEIDDLETMLVKSEKEKRTTEHKVKNLTEEVEFLNEDISKLNRAAKVVQEAHQQTLDDLHMEEEKLSSLSKANLKLEQQVDELEGALEQERKARMNCERELHKLEGNLKLNRESMENLESSQRHLAEELRKKELELSQMNSKVENEKGLVAQLQKTVKELQTQIKDLKEKLEAERTTRAKMERERADLTQDLADLNERLEEVGGSSLAQLEITKKQETKFQKLHRDMEEATLHFETTSASLKKRHADSLAELEGQVENLQQVKQKLEKDKSDLQLEVDDLLTRVEQMTRAKANAEKLCTLYEERLHEATAKLDKVTQLANDLAAQKTKLWSESGEFLRRLEEKEALINQLSREKSNFTRQIEDLRGQLEKETKSQSALAHALQKAQRDCDLLREQYEEEQEVKAELHRTLSKVNAEMVQWRMKYENNVIQRTEDLEDAKKELAIRLQEAAEAMGVANARNASLERARHQLQLELGDALSDLGKVRSAAARLDQKQLQSGKALADWKQKHEESQALLDASQKEVQALSTELLKLKNTYEESIVGQETLRRENKNLQEEISNLTNQVREGTKNLTEMEKVKKLIEEEKTEVQVTLEETEGALERNESKILHFQLELLEAKAELERKLSEKDEEIENFRRKQQCTIDSLQSSLDSEAKSRIEVTRLKKKMEEDLNEMELQLSCANRQVSEATKSLGQLQIQIKDLQMQLDDSTQLNSDLKEQVAVAERRNSLLQSELEDLRSLQEQTERGRRLSEEELLEATERINLFYTQNTSLLSQKKKLEADVARMQKEAEEVVQECQNAEEKAKKAAIEAANLSEELKKKQDTIAHLERTRENMEQTITDLQKRLAEAEQMALMGSRKQIQKLESRVRELEGELEGEIRRSAEAQRGARRLERCIKELTYQAEEDKKNLSRMQTQMDKLQLKVQNYKQQVEVAETQANQYLSKYKKQQHELNEVKERAEVAESQVNKLKIKAREFGKKVQEE.

Residues 29-79 (DGKKKCWIPDGENAYIEAEVKGSEDDGTVIVETADGESLSIKEDKIQQMNP) form the Myosin N-terminal SH3-like domain. Positions 83–770 (EMIEDMAMLT…FLGQLEAIRD (688 aa)) constitute a Myosin motor domain. At K127 the chain carries N6,N6,N6-trimethyllysine. Residue 176-183 (GESGAGKT) coordinates ATP. 2 actin-binding regions span residues 647 to 669 (LNKL…NPNV) and 749 to 763 (RFGI…GFLG). An IQ domain is found at 773–802 (LSKVFTLFQARAQGKLMRIKFQKILEERDA). The stretch at 833–1926 (KSSEVGEEVA…REFGKKVQEE (1094 aa)) forms a coiled coil.

Belongs to the TRAFAC class myosin-kinesin ATPase superfamily. Myosin family. As to quaternary structure, muscle myosin is a hexameric protein that consists of 2 heavy chain subunits (MHC), 2 alkali light chain subunits (MLC) and 2 regulatory light chain subunits (MLC-2).

It localises to the cytoplasm. It is found in the myofibril. In terms of biological role, muscle contraction. The polypeptide is Myosin-15 (MYH15) (Homo sapiens (Human)).